A 251-amino-acid polypeptide reads, in one-letter code: 3-deoxy-manno-octulosonate cytidylyltransferase (251 aa).

This sequence belongs to the KdsB family.

It localises to the cytoplasm. It catalyses the reaction 3-deoxy-alpha-D-manno-oct-2-ulosonate + CTP = CMP-3-deoxy-beta-D-manno-octulosonate + diphosphate. The protein operates within nucleotide-sugar biosynthesis; CMP-3-deoxy-D-manno-octulosonate biosynthesis; CMP-3-deoxy-D-manno-octulosonate from 3-deoxy-D-manno-octulosonate and CTP: step 1/1. It functions in the pathway bacterial outer membrane biogenesis; lipopolysaccharide biosynthesis. Functionally, activates KDO (a required 8-carbon sugar) for incorporation into bacterial lipopolysaccharide in Gram-negative bacteria. This Agrobacterium fabrum (strain C58 / ATCC 33970) (Agrobacterium tumefaciens (strain C58)) protein is 3-deoxy-manno-octulosonate cytidylyltransferase.